The chain runs to 565 residues: Periplasmic trehalase (565 aa).

Residues 1–30 form the signal peptide; that stretch reads MKSPAPSRPQKMALIPACIFLCFAALSVQA. Substrate is bound by residues Arg-152, 159–160, Asn-196, 205–207, 277–279, and Gly-310; these read WD, RSQ, and RPE. Catalysis depends on proton donor/acceptor residues Asp-312 and Glu-496. Residue Glu-511 coordinates substrate. The disordered stretch occupies residues 538 to 565; that stretch reads PCDNVPATRPTVKSATTQPSTKEAQPTP. The segment covering 548–565 has biased composition (polar residues); that stretch reads TVKSATTQPSTKEAQPTP.

This sequence belongs to the glycosyl hydrolase 37 family. Monomer.

It is found in the periplasm. It catalyses the reaction alpha,alpha-trehalose + H2O = alpha-D-glucose + beta-D-glucose. Its function is as follows. Provides the cells with the ability to utilize trehalose at high osmolarity by splitting it into glucose molecules that can subsequently be taken up by the phosphotransferase-mediated uptake system. In Escherichia coli (strain 55989 / EAEC), this protein is Periplasmic trehalase.